Here is a 217-residue protein sequence, read N- to C-terminus: Large ribosomal subunit protein uL16 (217 aa).

Belongs to the universal ribosomal protein uL16 family. As to quaternary structure, component of the small ribosomal subunit. Mature ribosomes consist of a small (40S) and a large (60S) subunit. The 40S subunit contains about 33 different proteins and 1 molecule of RNA (18S). The 60S subunit contains about 49 different proteins and 3 molecules of RNA (25S, 5.8S and 5S).

This Dictyostelium discoideum (Social amoeba) protein is Large ribosomal subunit protein uL16 (rpl10).